The primary structure comprises 535 residues: Light-independent protochlorophyllide reductase subunit B (535 aa).

Position 36 (Asp-36) interacts with [4Fe-4S] cluster. Catalysis depends on Asp-292, which acts as the Proton donor. Residue Gly-428–Leu-429 coordinates substrate. The interval Ser-447 to Gly-483 is disordered.

This sequence belongs to the ChlB/BchB/BchZ family. As to quaternary structure, protochlorophyllide reductase is composed of three subunits; BchL, BchN and BchB. Forms a heterotetramer of two BchB and two BchN subunits. It depends on [4Fe-4S] cluster as a cofactor.

It catalyses the reaction chlorophyllide a + oxidized 2[4Fe-4S]-[ferredoxin] + 2 ADP + 2 phosphate = protochlorophyllide a + reduced 2[4Fe-4S]-[ferredoxin] + 2 ATP + 2 H2O. The protein operates within porphyrin-containing compound metabolism; bacteriochlorophyll biosynthesis (light-independent). Its function is as follows. Component of the dark-operative protochlorophyllide reductase (DPOR) that uses Mg-ATP and reduced ferredoxin to reduce ring D of protochlorophyllide (Pchlide) to form chlorophyllide a (Chlide). This reaction is light-independent. The NB-protein (BchN-BchB) is the catalytic component of the complex. This is Light-independent protochlorophyllide reductase subunit B from Chlorobium phaeobacteroides (strain DSM 266 / SMG 266 / 2430).